We begin with the raw amino-acid sequence, 221 residues long: Protein FixW (221 aa).

One can recognise a Thioredoxin domain in the interval 5–156 (LNLGSPAPPI…LPKVIDGNWR (152 aa)). A disulfide bond links Cys43 and Cys46.

The protein belongs to the thioredoxin family.

This is Protein FixW (fixW) from Rhizobium leguminosarum.